The following is a 117-amino-acid chain: Large ribosomal subunit protein bL19 (117 aa).

This sequence belongs to the bacterial ribosomal protein bL19 family.

Its function is as follows. This protein is located at the 30S-50S ribosomal subunit interface and may play a role in the structure and function of the aminoacyl-tRNA binding site. This chain is Large ribosomal subunit protein bL19, found in Thioalkalivibrio sulfidiphilus (strain HL-EbGR7).